A 763-amino-acid polypeptide reads, in one-letter code: High glucose sensor RGT2 (763 aa).

The disordered stretch occupies residues 1–28 (MNDSQNCLRQREENSHLNPGNDFGHHQG). Residues 1–99 (MNDSQNCLRQ…PLPLRSNVMS (99 aa)) are Cytoplasmic-facing. The chain crosses the membrane as a helical span at residues 100–120 (VLVGIFVAVGGFLFGYDTGLI). The Extracellular segment spans residues 121–144 (NSITDMPYVKTYIAPNHSYFTTSQ). An N-linked (GlcNAc...) asparagine glycan is attached at N136. Residues 145–165 (IAILVSFLSLGTFFGALIAPY) form a helical membrane-spanning segment. Over 166 to 175 (ISDSYGRKPT) the chain is Cytoplasmic. Residues 176–196 (IMFSTAVIFSIGNSLQVASGG) traverse the membrane as a helical segment. Residue L197 is a topological domain, extracellular. A helical transmembrane segment spans residues 198–218 (VLLIVGRVISGIGIGIISAVV). Topologically, residues 219–231 (PLYQAEAAQKNLR) are cytoplasmic. The helical transmembrane segment at 232–252 (GAIISSYQWAITIGLLVSSAV) threads the bilayer. Residues 253–266 (SQGTHSKNGPSSYR) lie on the Extracellular side of the membrane. A helical transmembrane segment spans residues 267-287 (IPIGLQYVWSSILAVGMIFLP). Over 288–357 (ESPRYYVLKD…SENRPKQILR (70 aa)) the chain is Cytoplasmic. The helical transmembrane segment at 358-378 (IFTGIAIQAFQQASGINFIFY) threads the bilayer. At 379 to 393 (YGVNFFNNTGVDNSY) the chain is on the extracellular side. The N-linked (GlcNAc...) asparagine glycan is linked to N385. Residues 394–414 (LVSFISYAVNVAFSIPGMYLV) traverse the membrane as a helical segment. Residues 415–421 (DRIGRRP) lie on the Cytoplasmic side of the membrane. A helical transmembrane segment spans residues 422 to 442 (VLLAGGVIMAIANLVIAIVGV). Over 443–452 (SEGKTVVASK) the chain is Extracellular. Residues 453 to 473 (IMIAFICLFIAAFSATWGGVV) form a helical membrane-spanning segment. Residues 474 to 491 (WVVSAELYPLGVRSKCTA) lie on the Cytoplasmic side of the membrane. Residues 492 to 512 (ICAAANWLVNFTCALITPYIV) form a helical membrane-spanning segment. The Extracellular portion of the chain corresponds to 513–524 (DVGSHTSSMGPK). A helical membrane pass occupies residues 525–545 (IFFIWGGLNVVAVIVVYFAVY). Over 546–763 (ETRGLTLEEI…SKHSQYTSPQ (218 aa)) the chain is Cytoplasmic. A compositionally biased stretch (low complexity) spans 725–737 (SSTTSNDTSFSPS). The disordered stretch occupies residues 725 to 763 (SSTTSNDTSFSPSHNSNARTSSNWTSDLASKHSQYTSPQ). Residues 738–763 (HNSNARTSSNWTSDLASKHSQYTSPQ) are compositionally biased toward polar residues.

This sequence belongs to the major facilitator superfamily. Sugar transporter (TC 2.A.1.1) family. In terms of assembly, interacts with YCK1. Interacts with MTH1 and STD1. Phosphorylated in the C-terminal tail on Yck consensus sites in a yeast casein kinases YCK1 and YCK2 (Yck)-dependent manner. This phosphorylation is required for interaction with HXT corepressors MTH1 and STD1 and ultimately HXT expression.

It localises to the cell membrane. Its function is as follows. Low-affinity high glucose sensor that is part of the sensor/receptor-repressor (SSR) glucose-signaling pathway, which detects extracellular glucose and induces expression of glucose transporters that bring glucose into the cell. The transporter-like sensor generates an intracellular signal in the presence of high levels of glucose to promote high glucose-induced expression of HXT1. Binding of glucose to the RGT2 transmembrane domain activates a downstream signaling cascade, leading to phosphorylation of the RGT1 corepressors MTH1 and STD1, targeting them for SCF(Grr1)-dependent ubiquitination and degradation. Depletion of the corepressors robs RGT1 of its ability to repress expression of HXT genes, leading to accumulation of glucose transporters in the plasma membrane. Even though RGT2 is similar to glucose transporters, it appears to be unable to transport glucose. The sequence is that of High glucose sensor RGT2 from Saccharomyces cerevisiae (strain ATCC 204508 / S288c) (Baker's yeast).